The following is a 201-amino-acid chain: 3-isopropylmalate dehydratase small subunit (201 aa).

Belongs to the LeuD family. LeuD type 1 subfamily. In terms of assembly, heterodimer of LeuC and LeuD.

It carries out the reaction (2R,3S)-3-isopropylmalate = (2S)-2-isopropylmalate. The protein operates within amino-acid biosynthesis; L-leucine biosynthesis; L-leucine from 3-methyl-2-oxobutanoate: step 2/4. Functionally, catalyzes the isomerization between 2-isopropylmalate and 3-isopropylmalate, via the formation of 2-isopropylmaleate. The sequence is that of 3-isopropylmalate dehydratase small subunit from Afipia carboxidovorans (strain ATCC 49405 / DSM 1227 / KCTC 32145 / OM5) (Oligotropha carboxidovorans).